The primary structure comprises 301 residues: Probable alpha-L-glutamate ligase (301 aa).

Positions 104-287 (MQLLSRKGIG…VAGLIVDFIE (184 aa)) constitute an ATP-grasp domain. ATP-binding positions include K141, 178-179 (EF), D187, and 211-213 (RSN). Residues D248, E260, and N262 each coordinate Mg(2+). The Mn(2+) site is built by D248, E260, and N262.

This sequence belongs to the RimK family. The cofactor is Mg(2+). Mn(2+) serves as cofactor.

The chain is Probable alpha-L-glutamate ligase from Aliivibrio salmonicida (strain LFI1238) (Vibrio salmonicida (strain LFI1238)).